The sequence spans 321 residues: Ribosomal RNA small subunit methyltransferase H (321 aa).

S-adenosyl-L-methionine-binding positions include 40-42 (GGH), Asp-60, Phe-84, Asp-106, and Gln-113.

This sequence belongs to the methyltransferase superfamily. RsmH family.

The protein localises to the cytoplasm. It catalyses the reaction cytidine(1402) in 16S rRNA + S-adenosyl-L-methionine = N(4)-methylcytidine(1402) in 16S rRNA + S-adenosyl-L-homocysteine + H(+). In terms of biological role, specifically methylates the N4 position of cytidine in position 1402 (C1402) of 16S rRNA. In Haemophilus influenzae (strain PittEE), this protein is Ribosomal RNA small subunit methyltransferase H.